The primary structure comprises 161 residues: MKCPYCGARDARVIDSRELNGGESIRRRRECIACGRRFTTYERVEPIWLMVVKRDGRREPFDVGKLREGLRLALKKRPVSPDEIDRIVATVERELQSLGTSEVPSTLIGEIVLRELKQLDDVAYIRFASVYRRFADLEDLRREMEALGWRPRAAVTVDETS.

A zinc finger spans residues 3–34; the sequence is CPYCGARDARVIDSRELNGGESIRRRRECIAC. In terms of domain architecture, ATP-cone spans 49-139; it reads LMVVKRDGRR…VYRRFADLED (91 aa).

This sequence belongs to the NrdR family. It depends on Zn(2+) as a cofactor.

Functionally, negatively regulates transcription of bacterial ribonucleotide reductase nrd genes and operons by binding to NrdR-boxes. The chain is Transcriptional repressor NrdR from Thermomicrobium roseum (strain ATCC 27502 / DSM 5159 / P-2).